A 610-amino-acid polypeptide reads, in one-letter code: UvrABC system protein C (610 aa).

Positions 16-94 (SQPGVYRMYD…IKLYQPRYNV (79 aa)) constitute a GIY-YIG domain. The UVR domain occupies 204 to 239 (DQVLTQLIARMEKASQDLAFEEAARIRDQIQAVRRV).

The protein belongs to the UvrC family. As to quaternary structure, interacts with UvrB in an incision complex.

It is found in the cytoplasm. Functionally, the UvrABC repair system catalyzes the recognition and processing of DNA lesions. UvrC both incises the 5' and 3' sides of the lesion. The N-terminal half is responsible for the 3' incision and the C-terminal half is responsible for the 5' incision. The chain is UvrABC system protein C from Salmonella agona (strain SL483).